The chain runs to 320 residues: Lipoyl synthase (320 aa).

Residues cysteine 67, cysteine 72, cysteine 78, cysteine 93, cysteine 97, cysteine 100, and serine 307 each coordinate [4Fe-4S] cluster. Residues 79-296 enclose the Radical SAM core domain; the sequence is FNHGTATFMI…RDKANEMGFE (218 aa).

Belongs to the radical SAM superfamily. Lipoyl synthase family. The cofactor is [4Fe-4S] cluster.

It is found in the cytoplasm. The catalysed reaction is [[Fe-S] cluster scaffold protein carrying a second [4Fe-4S](2+) cluster] + N(6)-octanoyl-L-lysyl-[protein] + 2 oxidized [2Fe-2S]-[ferredoxin] + 2 S-adenosyl-L-methionine + 4 H(+) = [[Fe-S] cluster scaffold protein] + N(6)-[(R)-dihydrolipoyl]-L-lysyl-[protein] + 4 Fe(3+) + 2 hydrogen sulfide + 2 5'-deoxyadenosine + 2 L-methionine + 2 reduced [2Fe-2S]-[ferredoxin]. It functions in the pathway protein modification; protein lipoylation via endogenous pathway; protein N(6)-(lipoyl)lysine from octanoyl-[acyl-carrier-protein]: step 2/2. Functionally, catalyzes the radical-mediated insertion of two sulfur atoms into the C-6 and C-8 positions of the octanoyl moiety bound to the lipoyl domains of lipoate-dependent enzymes, thereby converting the octanoylated domains into lipoylated derivatives. This chain is Lipoyl synthase, found in Haemophilus influenzae (strain ATCC 51907 / DSM 11121 / KW20 / Rd).